A 141-amino-acid chain; its full sequence is Cholinesterase (141 aa).

Asn-39 carries an N-linked (GlcNAc...) asparagine glycan. 49 to 50 contacts substrate; the sequence is GG. Residue Ser-131 is the Acyl-ester intermediate of the active site. The residue at position 131 (Ser-131) is a Phosphoserine.

Belongs to the type-B carboxylesterase/lipase family. Homotetramer; disulfide-linked. Dimer of dimers. As to expression, present in most cells except erythrocytes.

The protein resides in the secreted. The catalysed reaction is an acylcholine + H2O = a carboxylate + choline + H(+). Esterase with broad substrate specificity. Contributes to the inactivation of the neurotransmitter acetylcholine. Can degrade neurotoxic organophosphate esters. This chain is Cholinesterase (BCHE), found in Sus scrofa (Pig).